The chain runs to 165 residues: MSATAEQNARNPKGKGGFARTVSQRKRKRLFLIGGALAVLAVAVGLMLTAFNQDIRFFRTPADLTEQDMTSGARFRLGGLVEEGSVSRTGSELRFTVTDTIKTVKVVFEGIPPDLFREGQGVVAEGRFGSDGLFRADNVLAKHDENYVPKDLADSLKKKGVWEGK.

The Cytoplasmic segment spans residues 1–29; the sequence is MSATAEQNARNPKGKGGFARTVSQRKRKR. Residues 30–50 form a helical; Signal-anchor for type II membrane protein membrane-spanning segment; sequence LFLIGGALAVLAVAVGLMLTA. Over 51 to 165 the chain is Periplasmic; sequence FNQDIRFFRT…LKKKGVWEGK (115 aa). Heme-binding residues include histidine 143 and tyrosine 147.

It belongs to the CcmE/CycJ family.

The protein resides in the cell inner membrane. Its function is as follows. Heme chaperone required for the biogenesis of c-type cytochromes. Transiently binds heme delivered by CcmC and transfers the heme to apo-cytochromes in a process facilitated by CcmF and CcmH. The polypeptide is Cytochrome c-type biogenesis protein CcmE (Brucella abortus (strain S19)).